The sequence spans 253 residues: Isoprenyl transferase (253 aa).

D30 is a catalytic residue. Mg(2+) is bound at residue D30. Substrate contacts are provided by residues 31 to 34, W35, H51, and 79 to 81; these read GNRR and STE. N82 serves as the catalytic Proton acceptor. Residues F83, R85, R202, and 208–210 contribute to the substrate site; that span reads RVS. E221 provides a ligand contact to Mg(2+).

This sequence belongs to the UPP synthase family. In terms of assembly, homodimer. Mg(2+) serves as cofactor.

Functionally, catalyzes the condensation of isopentenyl diphosphate (IPP) with allylic pyrophosphates generating different type of terpenoids. The polypeptide is Isoprenyl transferase (Chlamydia muridarum (strain MoPn / Nigg)).